Consider the following 629-residue polypeptide: tRNA uridine 5-carboxymethylaminomethyl modification enzyme MnmG (629 aa).

FAD is bound by residues 13 to 18, valine 125, and serine 180; that span reads GGGHAG. 273 to 287 contacts NAD(+); the sequence is GPRYCPSIEDKVMRF. Residue glutamine 370 coordinates FAD.

This sequence belongs to the MnmG family. Homodimer. Heterotetramer of two MnmE and two MnmG subunits. FAD is required as a cofactor.

It is found in the cytoplasm. NAD-binding protein involved in the addition of a carboxymethylaminomethyl (cmnm) group at the wobble position (U34) of certain tRNAs, forming tRNA-cmnm(5)s(2)U34. This Salmonella schwarzengrund (strain CVM19633) protein is tRNA uridine 5-carboxymethylaminomethyl modification enzyme MnmG.